Reading from the N-terminus, the 234-residue chain is Enolase-phosphatase E1 (234 aa).

Residues Asp-13 and Glu-15 each coordinate Mg(2+). Substrate contacts are provided by residues 127–128 (SS) and Lys-164. Asp-191 is a Mg(2+) binding site.

Belongs to the HAD-like hydrolase superfamily. MasA/MtnC family. In terms of assembly, monomer. Mg(2+) is required as a cofactor.

The protein resides in the cytoplasm. It localises to the nucleus. It carries out the reaction 5-methylsulfanyl-2,3-dioxopentyl phosphate + H2O = 1,2-dihydroxy-5-(methylsulfanyl)pent-1-en-3-one + phosphate. The protein operates within amino-acid biosynthesis; L-methionine biosynthesis via salvage pathway; L-methionine from S-methyl-5-thio-alpha-D-ribose 1-phosphate: step 3/6. Its pathway is amino-acid biosynthesis; L-methionine biosynthesis via salvage pathway; L-methionine from S-methyl-5-thio-alpha-D-ribose 1-phosphate: step 4/6. Its function is as follows. Bifunctional enzyme that catalyzes the enolization of 2,3-diketo-5-methylthiopentyl-1-phosphate (DK-MTP-1-P) into the intermediate 2-hydroxy-3-keto-5-methylthiopentenyl-1-phosphate (HK-MTPenyl-1-P), which is then dephosphorylated to form the acireductone 1,2-dihydroxy-3-keto-5-methylthiopentene (DHK-MTPene). This is Enolase-phosphatase E1 from Podospora anserina (strain S / ATCC MYA-4624 / DSM 980 / FGSC 10383) (Pleurage anserina).